The following is a 375-amino-acid chain: Serpin B5 (375 aa).

N-linked (GlcNAc...) asparagine glycosylation is found at asparagine 99, asparagine 133, asparagine 188, asparagine 298, and asparagine 361.

The protein belongs to the serpin family. Ov-serpin subfamily. Interacts with IRF6.

The protein localises to the secreted. It localises to the extracellular space. In terms of biological role, tumor suppressor. It blocks the growth, invasion, and metastatic properties of mammary tumors. As it does not undergo the S (stressed) to R (relaxed) conformational transition characteristic of active serpins, it exhibits no serine protease inhibitory activity. The protein is Serpin B5 (Serpinb5) of Rattus norvegicus (Rat).